Reading from the N-terminus, the 455-residue chain is Chromosomal replication initiator protein DnaA (455 aa).

The interval M1 to M75 is domain I, interacts with DnaA modulators. Residues M75 to T106 form a domain II region. A domain III, AAA+ region region spans residues S107 to A321. Residues G151, G153, K154, and T155 each coordinate ATP. The interval N322 to E455 is domain IV, binds dsDNA.

Belongs to the DnaA family. Oligomerizes as a right-handed, spiral filament on DNA at oriC.

It localises to the cytoplasm. Its function is as follows. Plays an essential role in the initiation and regulation of chromosomal replication. ATP-DnaA binds to the origin of replication (oriC) to initiate formation of the DNA replication initiation complex once per cell cycle. Binds the DnaA box (a 9 base pair repeat at the origin) and separates the double-stranded (ds)DNA. Forms a right-handed helical filament on oriC DNA; dsDNA binds to the exterior of the filament while single-stranded (ss)DNA is stabiized in the filament's interior. The ATP-DnaA-oriC complex binds and stabilizes one strand of the AT-rich DNA unwinding element (DUE), permitting loading of DNA polymerase. After initiation quickly degrades to an ADP-DnaA complex that is not apt for DNA replication. Binds acidic phospholipids. The sequence is that of Chromosomal replication initiator protein DnaA from Helicobacter pylori (strain Shi470).